The chain runs to 666 residues: TATA box-binding protein-associated factor RNA polymerase I subunit B (666 aa).

The RRN7-type zinc finger occupies 1–29; that stretch reads MICTECENDAFDEEDDGYYYCQRCGVQVE. 4 residues coordinate Zn(2+): C3, C6, C21, and C24. The B-reader stretch occupies residues 30–64; the sequence is NLIQTGVDDGDLIGEGGGTQGALYNPKHRRTEPQP. 2 disordered regions span residues 45-110 and 189-208; these read GGGT…VDKE and DSEH…LKRH. Residues 65 to 80 form a B-linker region; sequence ITPSQPRFTDDTSRYS. Over residues 78–89 the composition is skewed to polar residues; it reads RYSQFKSQFESE. Residues 81–285 are N-terminal cyclin fold; that stretch reads QFKSQFESEN…REQMGERSAA (205 aa). Basic and acidic residues-rich tracts occupy residues 90–110 and 189–202; these read NGNK…VDKE and DSEH…VKDA. Positions 286-288 are C-terminal cyclin fold; that stretch reads CPV. The disordered stretch occupies residues 515-548; that stretch reads SDGNNPCSSSSRRNESVSIGLDLSSSEHRESSSP. Basic and acidic residues predominate over residues 539 to 548; it reads SSEHRESSSP.

This sequence belongs to the RRN7/TAF1B family. In terms of assembly, interacts with TFIIF. Interacts with MEE14/CBP1, TBP1 and NRPB1 (via CTD). As to expression, expressed at high levels in seedlings, inflorescences and young siliques and at lower levels in roots. Not detected in leaves and stems. Detected in root tips and shoot apical meristems, in anthers, primarily in microspores with weaker expression in mature pollen grains and in the central cell of the mature female gametophyte. Not expressed in synergids, egg cells, antipodal cells, endosperm cells and fertilized egg cells.

Its subcellular location is the nucleus. It is found in the nucleolus. Functionally, component of RNA polymerase I core factor complex that acts as a GTF2B/TFIIB-like factor and plays a key role in multiple steps during transcription initiation such as pre-initiation complex (PIC) assembly and postpolymerase recruitment events in polymerase I (Pol I) transcription. Binds rDNA promoters and plays a role in Pol I recruitment. Required for the development of the one-cell zygote and endosperm in embryos. Required for micropylar pollen tube guidance, but has no effect on ovule development and gametophytic cell fate specification. May regulate the transcription of secreted cysteine-rich peptide (CRP) genes in the embryo sac. This chain is TATA box-binding protein-associated factor RNA polymerase I subunit B, found in Arabidopsis thaliana (Mouse-ear cress).